Reading from the N-terminus, the 78-residue chain is RNA-binding protein KhpA (78 aa).

Positions threonine 29–lysine 78 constitute a KH domain.

This sequence belongs to the KhpA RNA-binding protein family.

Its subcellular location is the cytoplasm. A probable RNA-binding protein. The chain is RNA-binding protein KhpA from Chlamydia pneumoniae (Chlamydophila pneumoniae).